A 227-amino-acid chain; its full sequence is 7-cyano-7-deazaguanine synthase (227 aa).

Residue 7-17 (LSGGMDSLVTT) coordinates ATP. Cys187, Cys195, Cys198, and Cys201 together coordinate Zn(2+).

Belongs to the QueC family. Zn(2+) serves as cofactor.

The enzyme catalyses 7-carboxy-7-deazaguanine + NH4(+) + ATP = 7-cyano-7-deazaguanine + ADP + phosphate + H2O + H(+). It participates in purine metabolism; 7-cyano-7-deazaguanine biosynthesis. In terms of biological role, catalyzes the ATP-dependent conversion of 7-carboxy-7-deazaguanine (CDG) to 7-cyano-7-deazaguanine (preQ(0)). This chain is 7-cyano-7-deazaguanine synthase, found in Chlorobium luteolum (strain DSM 273 / BCRC 81028 / 2530) (Pelodictyon luteolum).